Consider the following 828-residue polypeptide: Beta-galactosidase 13 (828 aa).

Positions Met-1–Ala-23 are cleaved as a signal peptide. Residue Asn-157 is glycosylated (N-linked (GlcNAc...) asparagine). Glu-187 (proton donor) is an active-site residue. N-linked (GlcNAc...) asparagine glycans are attached at residues Asn-198 and Asn-249. Catalysis depends on Glu-259, which acts as the Nucleophile. 8 N-linked (GlcNAc...) asparagine glycosylation sites follow: Asn-260, Asn-362, Asn-366, Asn-392, Asn-502, Asn-578, Asn-586, and Asn-615. One can recognise an SUEL-type lectin domain in the interval Ala-746–Cys-828.

It belongs to the glycosyl hydrolase 35 family.

It is found in the secreted. The protein localises to the extracellular space. Its subcellular location is the apoplast. The enzyme catalyses Hydrolysis of terminal non-reducing beta-D-galactose residues in beta-D-galactosides.. The chain is Beta-galactosidase 13 from Oryza sativa subsp. japonica (Rice).